The chain runs to 489 residues: Cobyric acid synthase (489 aa).

Positions 247–439 (ALKVVVPVLP…IHGVFDEPAA (193 aa)) constitute a GATase cobBQ-type domain. Residue Cys-328 is the Nucleophile of the active site. His-431 is an active-site residue.

It belongs to the CobB/CobQ family. CobQ subfamily.

It participates in cofactor biosynthesis; adenosylcobalamin biosynthesis. In terms of biological role, catalyzes amidations at positions B, D, E, and G on adenosylcobyrinic A,C-diamide. NH(2) groups are provided by glutamine, and one molecule of ATP is hydrogenolyzed for each amidation. The protein is Cobyric acid synthase of Marinobacter nauticus (strain ATCC 700491 / DSM 11845 / VT8) (Marinobacter aquaeolei).